A 457-amino-acid chain; its full sequence is tRNA modification GTPase MnmE (457 aa).

Residues arginine 25, glutamate 87, and arginine 126 each contribute to the (6S)-5-formyl-5,6,7,8-tetrahydrofolate site. The 155-residue stretch at 223–377 folds into the TrmE-type G domain; it reads GISTAIIGRP…IEERINQLFF (155 aa). Asparagine 233 is a binding site for K(+). Residues 233 to 238, 252 to 258, and 277 to 280 each bind GTP; these read NVGKSS, TDIAGTT, and DTAG. Serine 237 is a Mg(2+) binding site. Threonine 252, isoleucine 254, and threonine 257 together coordinate K(+). Residue threonine 258 coordinates Mg(2+). A (6S)-5-formyl-5,6,7,8-tetrahydrofolate-binding site is contributed by lysine 457.

It belongs to the TRAFAC class TrmE-Era-EngA-EngB-Septin-like GTPase superfamily. TrmE GTPase family. Homodimer. Heterotetramer of two MnmE and two MnmG subunits. Requires K(+) as cofactor.

The protein resides in the cytoplasm. Functionally, exhibits a very high intrinsic GTPase hydrolysis rate. Involved in the addition of a carboxymethylaminomethyl (cmnm) group at the wobble position (U34) of certain tRNAs, forming tRNA-cmnm(5)s(2)U34. This chain is tRNA modification GTPase MnmE, found in Streptococcus gordonii (strain Challis / ATCC 35105 / BCRC 15272 / CH1 / DL1 / V288).